The following is a 272-amino-acid chain: Acidic leucine-rich nuclear phosphoprotein 32 family member B (272 aa).

LRR repeat units follow at residues 16–40 (PAAVQELVLDNCKANDGKIEGLTDE), 43–64 (NLEFLSLINVGLFSVSDLPKLP), 65–84 (KLKKLELSENRIFGGLDRLA), and 89–110 (SLTHLNLSGNNLKDISTLEPLK). Residues 123 to 161 (CEVTNRSDYRETVFRLLPQLSYLDGYDREDQEAPDSDVE) enclose the LRRCT domain. The segment covering 149–254 (DREDQEAPDS…DEDEDEEEEE (106 aa)) has biased composition (acidic residues). The disordered stretch occupies residues 149 to 272 (DREDQEAPDS…RETDDEGEDD (124 aa)). Phosphoserine is present on residues S164 and S171. A compositionally biased stretch (basic and acidic residues) spans 255-265 (SGKGEKRKRET). Residues 260–263 (KRKR) carry the Nuclear localization signal motif. The residue at position 265 (T265) is a Phosphothreonine.

This sequence belongs to the ANP32 family. In terms of assembly, interacts with histones H3 and H4. Interacts with KLF5; this interaction induces promoter region-specific histone incorporation and inhibition of histone acetylation by ANP32B. Post-translationally, some glutamate residues are glycylated by TTLL8. This modification occurs exclusively on glutamate residues and results in a glycine chain on the gamma-carboxyl group. Directly cleaved by caspase-3/CASP3. In terms of tissue distribution, predominantly expressed in brain. Expressed in the entire embryonic brain, whereas in the adult brain its expression is restricted to the subventricular zone where there are neural progenitor cells.

It localises to the nucleus. In terms of biological role, multifunctional protein that is involved in the regulation of many processes including cell proliferation, apoptosis, cell cycle progression or transcription. Regulates the proliferation of neuronal stem cells, differentiation of leukemic cells and progression from G1 to S phase of the cell cycle. As negative regulator of caspase-3-dependent apoptosis, may act as an antagonist of ANP32A in regulating tissue homeostasis. Exhibits histone chaperone properties, able to recruit histones to certain promoters, thus regulating the transcription of specific genes. Also plays an essential role in the nucleocytoplasmic transport of specific mRNAs via the uncommon nuclear mRNA export receptor XPO1/CRM1. Participates in the regulation of adequate adaptive immune responses by acting on mRNA expression and cell proliferation. In Rattus norvegicus (Rat), this protein is Acidic leucine-rich nuclear phosphoprotein 32 family member B (Anp32b).